The primary structure comprises 447 residues: Ribosomal protein uS12 methylthiotransferase RimO (447 aa).

Positions 6-122 (EKVSMVSLGC…IAEIIEEKSS (117 aa)) constitute an MTTase N-terminal domain. Residues cysteine 15, cysteine 51, cysteine 85, cysteine 160, cysteine 164, and cysteine 167 each contribute to the [4Fe-4S] cluster site. Residues 146–376 (SSPAYTAYLK…MKAQARVSFK (231 aa)) form the Radical SAM core domain. A TRAM domain is found at 379–447 (RRLIDTEEQV…DYDLIGEIIS (69 aa)).

The protein belongs to the methylthiotransferase family. RimO subfamily. The cofactor is [4Fe-4S] cluster.

The protein localises to the cytoplasm. The enzyme catalyses L-aspartate(89)-[ribosomal protein uS12]-hydrogen + (sulfur carrier)-SH + AH2 + 2 S-adenosyl-L-methionine = 3-methylsulfanyl-L-aspartate(89)-[ribosomal protein uS12]-hydrogen + (sulfur carrier)-H + 5'-deoxyadenosine + L-methionine + A + S-adenosyl-L-homocysteine + 2 H(+). Functionally, catalyzes the methylthiolation of an aspartic acid residue of ribosomal protein uS12. The polypeptide is Ribosomal protein uS12 methylthiotransferase RimO (Geobacter sulfurreducens (strain ATCC 51573 / DSM 12127 / PCA)).